Consider the following 455-residue polypeptide: Ribulose bisphosphate carboxylase large chain (455 aa).

Position 5 is an N6,N6,N6-trimethyllysine (K5). Substrate-binding residues include N114 and T164. The Proton acceptor role is filled by K166. Residue K168 coordinates substrate. 3 residues coordinate Mg(2+): K192, D194, and E195. K192 is subject to N6-carboxylysine. H285 (proton acceptor) is an active-site residue. Substrate is bound by residues R286, H318, and S370.

Belongs to the RuBisCO large chain family. Type I subfamily. As to quaternary structure, heterohexadecamer of 8 large chains and 8 small chains; disulfide-linked. The disulfide link is formed within the large subunit homodimers. The cofactor is Mg(2+). The disulfide bond which can form in the large chain dimeric partners within the hexadecamer appears to be associated with oxidative stress and protein turnover.

Its subcellular location is the plastid. It is found in the chloroplast. The enzyme catalyses 2 (2R)-3-phosphoglycerate + 2 H(+) = D-ribulose 1,5-bisphosphate + CO2 + H2O. It carries out the reaction D-ribulose 1,5-bisphosphate + O2 = 2-phosphoglycolate + (2R)-3-phosphoglycerate + 2 H(+). RuBisCO catalyzes two reactions: the carboxylation of D-ribulose 1,5-bisphosphate, the primary event in carbon dioxide fixation, as well as the oxidative fragmentation of the pentose substrate in the photorespiration process. Both reactions occur simultaneously and in competition at the same active site. The protein is Ribulose bisphosphate carboxylase large chain of Lupinus albus (White lupine).